We begin with the raw amino-acid sequence, 431 residues long: UDP-N-acetylmuramate--L-alanine ligase (431 aa).

Residue 108-114 (GAHGKST) coordinates ATP.

The protein belongs to the MurCDEF family.

It localises to the cytoplasm. The catalysed reaction is UDP-N-acetyl-alpha-D-muramate + L-alanine + ATP = UDP-N-acetyl-alpha-D-muramoyl-L-alanine + ADP + phosphate + H(+). It participates in cell wall biogenesis; peptidoglycan biosynthesis. In terms of biological role, cell wall formation. This is UDP-N-acetylmuramate--L-alanine ligase from Campylobacter jejuni (strain RM1221).